Consider the following 445-residue polypeptide: Probable multidrug resistance protein YpnP (445 aa).

A run of 12 helical transmembrane segments spans residues 15 to 35 (LVLFSMPIMLGNALQVSFQFI), 49 to 69 (LGAAAVSSTIVLTVLSFILGL), 95 to 115 (AFVVLLTGLSIGFGAAGFFLS), 136 to 156 (LQIQFIGILFLFGYNFISTVL), 168 to 188 (FIAFAVVLNTVLAPLFISVFR), 194 to 214 (AAYSTILSQGIAFLYGLFYVI), 240 to 260 (IPAGLQMMVITGGMMAIMSVV), 277 to 297 (LDSIITLPAMAAGTAVNSMAG), 314 to 334 (LGVIAVISCMLVIAVMIWVFG), 355 to 375 (LKWIAFFYPFIGVNFVLNGIV), 384 to 404 (VLVLNLISFWVLRYPFTALFS), and 411 to 431 (GIGLGIGMSFLFSSCAAFLYY).

It belongs to the multi antimicrobial extrusion (MATE) (TC 2.A.66.1) family.

It is found in the cell membrane. The sequence is that of Probable multidrug resistance protein YpnP (ypnP) from Bacillus subtilis (strain 168).